The sequence spans 377 residues: Presenilin-associated rhomboid-like protein, mitochondrial (377 aa).

A mitochondrion-targeting transit peptide spans 1 to 52 (MAWRGWAQRGWGCGQAWTLPVCGGSYEELTAALAPSRLLRRRFNFFIQQKCG). Residues 53 to 99 (FRKAPRKVEPRRSDTSSEAYKRSALIPPVEETAFYPSPYPIRTLVKP) lie on the Mitochondrial matrix side of the membrane. Residues Ser-65 and Ser-68 each carry the phosphoserine modification. A helical transmembrane segment spans residues 100–119 (LFFTVGFTGCAFGSAAIWQY). Residues 120 to 165 (ESLKSKVQSYFDGIKADWLDSIRPQKEGDFRKEINKWWNNLSDGQR) are Mitochondrial intermembrane-facing. Residues 166–185 (TVTGIIAANVFVFCLWRVPS) traverse the membrane as a helical segment. Residues 186–205 (LQRTMIRYFTSNPASKVLCS) are Mitochondrial matrix-facing. Residues 206–228 (PMLLSTFSHFSLFHMAANMYVLW) traverse the membrane as a helical segment. Residues 229-242 (SFSSSIVNILGQEQ) are Mitochondrial intermembrane-facing. Residues 243–260 (FMAVYLSAGVISTFVSYV) form a helical membrane-spanning segment. The Mitochondrial matrix segment spans residues 261-270 (CKVATGRYGP). A helical membrane pass occupies residues 271-287 (SLGASGAIMTVLAAVCT). The active-site Nucleophile is the Ser-275. Residues 288-293 (KIPEGR) lie on the Mitochondrial intermembrane side of the membrane. The chain crosses the membrane as a helical span at residues 294–316 (LAIIFLPMFTFTAGNALKAIIAM). The Mitochondrial matrix portion of the chain corresponds to 317-330 (DTAGMILGWKFFDH). A helical membrane pass occupies residues 331 to 352 (AAHLGGALFGIWYITYGHELIW). His-333 is an active-site residue. Topologically, residues 353–377 (KNREPLVKIWHEMRTNSPKKGGGSK) are mitochondrial intermembrane.

This sequence belongs to the peptidase S54 family. In terms of assembly, interacts with PSEN1 and PSEN2. Binds OPA1. Post-translationally, P-beta is proteolytically processed (beta-cleavage) in a PARL-dependent manner.

The protein localises to the mitochondrion inner membrane. It localises to the nucleus. It catalyses the reaction Cleaves type-1 transmembrane domains using a catalytic dyad composed of serine and histidine that are contributed by different transmembrane domains.. Functionally, required for the control of apoptosis during postnatal growth. Essential for proteolytic processing of an antiapoptotic form of OPA1 which prevents the release of mitochondrial cytochrome c in response to intrinsic apoptotic signals. Required for the maturation of PINK1 into its 52kDa mature form after its cleavage by mitochondrial-processing peptidase (MPP). Promotes cleavage of serine/threonine-protein phosphatase PGAM5 in damaged mitochondria in response to loss of mitochondrial membrane potential. Mediates differential cleavage of PINK1 and PGAM5 depending on the health status of mitochondria, disassociating from PINK1 and associating with PGAM5 in response to mitochondrial membrane potential loss. Required for processing of CLPB into a form with higher protein disaggregase activity by removing an autoinhibitory N-terminal peptide. Promotes processing of DIABLO/SMAC in the mitochondrion which is required for DIABLO apoptotic activity. Also required for cleavage of STARD7 and TTC19. Promotes changes in mitochondria morphology regulated by phosphorylation of P-beta domain. This chain is Presenilin-associated rhomboid-like protein, mitochondrial (PARL), found in Bos taurus (Bovine).